Consider the following 293-residue polypeptide: Ribosomal protein L11 methyltransferase (293 aa).

The S-adenosyl-L-methionine site is built by T145, G166, D188, and N230.

The protein belongs to the methyltransferase superfamily. PrmA family.

It is found in the cytoplasm. The enzyme catalyses L-lysyl-[protein] + 3 S-adenosyl-L-methionine = N(6),N(6),N(6)-trimethyl-L-lysyl-[protein] + 3 S-adenosyl-L-homocysteine + 3 H(+). Its function is as follows. Methylates ribosomal protein L11. This chain is Ribosomal protein L11 methyltransferase, found in Escherichia coli O7:K1 (strain IAI39 / ExPEC).